Consider the following 422-residue polypeptide: Enolase (422 aa).

Gln162 is a (2R)-2-phosphoglycerate binding site. The active-site Proton donor is the Glu204. Residues Asp241, Glu284, and Asp311 each coordinate Mg(2+). Positions 336, 365, 366, and 387 each coordinate (2R)-2-phosphoglycerate. The active-site Proton acceptor is the Lys336.

Belongs to the enolase family. It depends on Mg(2+) as a cofactor.

Its subcellular location is the cytoplasm. It localises to the secreted. The protein localises to the cell surface. It catalyses the reaction (2R)-2-phosphoglycerate = phosphoenolpyruvate + H2O. It participates in carbohydrate degradation; glycolysis; pyruvate from D-glyceraldehyde 3-phosphate: step 4/5. Catalyzes the reversible conversion of 2-phosphoglycerate (2-PG) into phosphoenolpyruvate (PEP). It is essential for the degradation of carbohydrates via glycolysis. The chain is Enolase from Thermus thermophilus (strain ATCC 27634 / DSM 579 / HB8).